A 327-amino-acid chain; its full sequence is Deoxyribonuclease (327 aa).

The segment at residues 1-24 is a signal peptide (or 35); sequence MSKKLRNFLVRIIVAAFASFAVMA. Positions 299 to 327 are disordered; the sequence is DSTTDEIENSVDDSEEIVYNDTTTEEEEN.

The catalysed reaction is Endonucleolytic cleavage to 5'-phosphodinucleotide and 5'-phosphooligonucleotide end-products.. In terms of biological role, may have a role in S.equisimilis virulence. The protein is Deoxyribonuclease (sdc) of Streptococcus dysgalactiae subsp. equisimilis (Streptococcus equisimilis).